A 209-amino-acid polypeptide reads, in one-letter code: uncharacterized protein (209 aa).

The first 17 residues, 1–17 (MKKLVTGLLALSLFLAA), serve as a signal peptide directing secretion. The interval 17-106 (ACGQDSDQQK…SGQTTNNQKS (90 aa)) is disordered. The N-palmitoyl cysteine moiety is linked to residue Cys-18. Residue Cys-18 is the site of S-diacylglycerol cysteine attachment. The segment covering 23–70 (DQQKDSNKEKDDKAKTEQQDKKTNDSSKDKKDNKDDSKDVNKDNKDNS) has biased composition (basic and acidic residues). The segment covering 71–106 (ANDNQQQSNSNATNNDQNQTNNNQSNSGQTTNNQKS) has biased composition (low complexity).

It is found in the cell membrane. This is an uncharacterized protein from Staphylococcus aureus (strain MRSA252).